The primary structure comprises 308 residues: Olfactory receptor 5H19 (308 aa).

Topologically, residues 1-27 (MEKNATLLTEFVLTGLSHQPLWNIPLF) are extracellular. Residue Asn4 is glycosylated (N-linked (GlcNAc...) asparagine). Residues 28–48 (LVFLVIYLITIVGNVSLITLI) form a helical membrane-spanning segment. Topologically, residues 49–55 (WTDPHLH) are cytoplasmic. The helical transmembrane segment at 56-76 (IPMYLFLGSLAFVDTSISSIV) threads the bilayer. The Extracellular portion of the chain corresponds to 77–92 (VPKMLLNFFGKSKVIT). A helical membrane pass occupies residues 93 to 113 (LSECMAQFFLFNISATTECFL). A disulfide bridge links Cys96 with Cys188. Residues 114-143 (LAAMAYDRYVAICKPLLYPVVMTNGLCVWL) are Cytoplasmic-facing. The helical transmembrane segment at 144 to 164 (IALSFVAGIIHALIHEGFLLR) threads the bilayer. Residues 165-197 (LTFCNSNMIHNFYCDIISLLKISCTDTSLNYLI) lie on the Extracellular side of the membrane. A helical membrane pass occupies residues 198–218 (VFIFSGSIQVFTISTILVSYT). The Cytoplasmic portion of the chain corresponds to 219 to 238 (IILFTILKKKSAKGIKKAFS). A helical membrane pass occupies residues 239–259 (TCGAHLLSVSLYYGPLLFMYV). The Extracellular portion of the chain corresponds to 260-270 (HPASSEVDDQD). The chain crosses the membrane as a helical span at residues 271 to 291 (MIDSLFYTVIIPVLNPIIYSL). The Cytoplasmic portion of the chain corresponds to 292–308 (RNKQVIDSLAKFLKRNV).

This sequence belongs to the G-protein coupled receptor 1 family.

It localises to the cell membrane. Potential odorant receptor. This chain is Olfactory receptor 5H19, found in Mus musculus (Mouse).